A 135-amino-acid polypeptide reads, in one-letter code: UPF0355 protein SAV0387 (135 aa).

The protein belongs to the UPF0355 family.

In Staphylococcus aureus (strain Mu50 / ATCC 700699), this protein is UPF0355 protein SAV0387.